The chain runs to 129 residues: MNSSTALMCFALLLISPLCMGYSDEDREADNLRIAEIIKNAQDDDSKINSTQELLDIYRRLYPSLTPEERESIDKFVNEHTDAIIIDGVPIQGGRKARIVGKIVSPGVKGLATGFFEELGSKLAQLFTG.

The first 21 residues, 1–21 (MNSSTALMCFALLLISPLCMG), serve as a signal peptide directing secretion. Residue Asn49 is glycosylated (N-linked (GlcNAc...) asparagine).

This sequence belongs to the Turandot family. Expressed in the fat body (at protein level).

It is found in the secreted. In terms of biological role, a humoral factor that plays a role in stress tolerance; gives increased resistance to the lethal effects of bacterial challenge and stress. Regulated by the JAK/STAT pathway and NF-KB-like Relish pathway in the fat body, upd3 in the hemocytes and Mekk1 in response to septic injury and consequent immune response. This chain is Protein Turandot A, found in Drosophila melanogaster (Fruit fly).